The primary structure comprises 564 residues: E3 ubiquitin-protein ligase TRIM16 (564 aa).

The disordered stretch occupies residues 1 to 70; the sequence is MAELDLMAPG…DPAEQGDPAG (70 aa). Over residues 24 to 39 the composition is skewed to low complexity; that stretch reads SPDSGSPSPDSGSASP. 2 consecutive B box-type zinc fingers follow at residues 72-122 and 126-165; these read GKEV…LTEP and HNWRYCPAHHSPLSAFCCPDQQCICQDCCQEHSGHTIVSL. Residue Ser116 is modified to Phosphoserine. 4 residues coordinate Zn(2+): Cys131, His134, Cys153, and His157. Coiled coils occupy residues 165–203, 243–274, and 320–340; these read LDAARRDKEAELQCTQLDLERKLKLNENAISRLQANQKS, AALSQANGIKAHLEYRSAEMEKSKQELERMAA, and HLIQLLENYKKKLQEFSKEEE. Ser203 carries the post-translational modification Phosphoserine. The region spanning 355–553 is the B30.2/SPRY domain; it reads YWTSKPEPST…RIVDLGEEPE (199 aa).

The protein belongs to the TRIM/RBCC family. Homodimerizes via its coiled-coil domain. Heterodimerizes with MID1, TRIM24 and PML. Interacts with Galectin-3/LGALS3 in a ULK1-dependent manner; this interaction mediates autophagy of damage endomembranes. Interacts with BECN1. Interacts with ATG16L1. Interacts with p62/SQSTM and LC3B/MAP1LC3B. Phosphorylated by ULK1. In terms of processing, auto-ubiquitinates via its B-Boxes.

Its subcellular location is the cytoplasm. The enzyme catalyses S-ubiquitinyl-[E2 ubiquitin-conjugating enzyme]-L-cysteine + [acceptor protein]-L-lysine = [E2 ubiquitin-conjugating enzyme]-L-cysteine + N(6)-ubiquitinyl-[acceptor protein]-L-lysine.. E3 ubiquitin ligase that plays an essential role in the organization of autophagic response and ubiquitination upon lysosomal and phagosomal damages. Plays a role in the stress-induced biogenesis and degradation of protein aggresomes by regulating the p62-KEAP1-NRF2 signaling and particularly by modulating the ubiquitination levels and thus stability of NRF2. Acts as a scaffold protein and facilitates autophagic degradation of protein aggregates by interacting with p62/SQSTM, ATG16L1 and LC3B/MAP1LC3B. In turn, protects the cell against oxidative stress-induced cell death as a consequence of endomembrane damage. The polypeptide is E3 ubiquitin-protein ligase TRIM16 (TRIM16) (Pongo abelii (Sumatran orangutan)).